The chain runs to 215 residues: Large ribosomal subunit protein bL25 (215 aa).

Residues 192–203 (EEATEEEEEAAE) show a composition bias toward acidic residues. The tract at residues 192 to 215 (EEATEEEEEAAEPEVIKRKEEEEE) is disordered. A compositionally biased stretch (basic and acidic residues) spans 205-215 (EVIKRKEEEEE).

It belongs to the bacterial ribosomal protein bL25 family. CTC subfamily. In terms of assembly, part of the 50S ribosomal subunit; part of the 5S rRNA/L5/L18/L25 subcomplex. Contacts the 5S rRNA. Binds to the 5S rRNA independently of L5 and L18.

Its function is as follows. This is one of the proteins that binds to the 5S RNA in the ribosome where it forms part of the central protuberance. The polypeptide is Large ribosomal subunit protein bL25 (Thermotoga maritima (strain ATCC 43589 / DSM 3109 / JCM 10099 / NBRC 100826 / MSB8)).